We begin with the raw amino-acid sequence, 458 residues long: Enolase (458 aa).

Residue Gln-177 participates in (2R)-2-phosphoglycerate binding. The Proton donor role is filled by Glu-219. Mg(2+)-binding residues include Asp-256, Glu-310, and Asp-337. The (2R)-2-phosphoglycerate site is built by Lys-362, Arg-391, Ser-392, and Lys-413. Lys-362 serves as the catalytic Proton acceptor.

The protein belongs to the enolase family. Requires Mg(2+) as cofactor.

The protein localises to the cytoplasm. It is found in the secreted. Its subcellular location is the cell surface. It carries out the reaction (2R)-2-phosphoglycerate = phosphoenolpyruvate + H2O. It participates in carbohydrate degradation; glycolysis; pyruvate from D-glyceraldehyde 3-phosphate: step 4/5. Functionally, catalyzes the reversible conversion of 2-phosphoglycerate (2-PG) into phosphoenolpyruvate (PEP). It is essential for the degradation of carbohydrates via glycolysis. The protein is Enolase of Mycoplasma genitalium (strain ATCC 33530 / DSM 19775 / NCTC 10195 / G37) (Mycoplasmoides genitalium).